Here is a 176-residue protein sequence, read N- to C-terminus: Small ribosomal subunit protein uS5 (176 aa).

Residues 11–74 (LSEVLVDVNR…QAAKKRMMKV (64 aa)) form the S5 DRBM domain.

Belongs to the universal ribosomal protein uS5 family. As to quaternary structure, part of the 30S ribosomal subunit. Contacts proteins S4 and S8.

With S4 and S12 plays an important role in translational accuracy. In terms of biological role, located at the back of the 30S subunit body where it stabilizes the conformation of the head with respect to the body. This chain is Small ribosomal subunit protein uS5, found in Rickettsia peacockii (strain Rustic).